The sequence spans 169 residues: Crossover junction endodeoxyribonuclease RuvC (169 aa).

Catalysis depends on residues aspartate 11, glutamate 71, and aspartate 143. Positions 11, 71, and 143 each coordinate Mg(2+).

This sequence belongs to the RuvC family. In terms of assembly, homodimer which binds Holliday junction (HJ) DNA. The HJ becomes 2-fold symmetrical on binding to RuvC with unstacked arms; it has a different conformation from HJ DNA in complex with RuvA. In the full resolvosome a probable DNA-RuvA(4)-RuvB(12)-RuvC(2) complex forms which resolves the HJ. Mg(2+) is required as a cofactor.

It localises to the cytoplasm. It catalyses the reaction Endonucleolytic cleavage at a junction such as a reciprocal single-stranded crossover between two homologous DNA duplexes (Holliday junction).. The RuvA-RuvB-RuvC complex processes Holliday junction (HJ) DNA during genetic recombination and DNA repair. Endonuclease that resolves HJ intermediates. Cleaves cruciform DNA by making single-stranded nicks across the HJ at symmetrical positions within the homologous arms, yielding a 5'-phosphate and a 3'-hydroxyl group; requires a central core of homology in the junction. The consensus cleavage sequence is 5'-(A/T)TT(C/G)-3'. Cleavage occurs on the 3'-side of the TT dinucleotide at the point of strand exchange. HJ branch migration catalyzed by RuvA-RuvB allows RuvC to scan DNA until it finds its consensus sequence, where it cleaves and resolves the cruciform DNA. The protein is Crossover junction endodeoxyribonuclease RuvC of Allorhizobium ampelinum (strain ATCC BAA-846 / DSM 112012 / S4) (Agrobacterium vitis (strain S4)).